The primary structure comprises 621 residues: Chaperone protein HtpG (621 aa).

An a; substrate-binding region spans residues 1 to 341 (MSNQEYTFQT…SEDLPLNVSR (341 aa)). The segment at 342-547 (EILQQNKILA…GDEQNAMMAN (206 aa)) is b. The c stretch occupies residues 548-621 (FMRQMGQSVP…RLNSVLLKAL (74 aa)).

Belongs to the heat shock protein 90 family. Homodimer.

The protein resides in the cytoplasm. Its function is as follows. Molecular chaperone. Has ATPase activity. The chain is Chaperone protein HtpG from Helicobacter pylori (strain HPAG1).